Consider the following 285-residue polypeptide: tRNA pseudouridine synthase A (285 aa).

The active-site Nucleophile is the Asp69. Tyr127 lines the substrate pocket.

It belongs to the tRNA pseudouridine synthase TruA family. In terms of assembly, homodimer.

The enzyme catalyses uridine(38/39/40) in tRNA = pseudouridine(38/39/40) in tRNA. Its function is as follows. Formation of pseudouridine at positions 38, 39 and 40 in the anticodon stem and loop of transfer RNAs. The chain is tRNA pseudouridine synthase A from Pseudomonas aeruginosa (strain ATCC 15692 / DSM 22644 / CIP 104116 / JCM 14847 / LMG 12228 / 1C / PRS 101 / PAO1).